A 355-amino-acid chain; its full sequence is Hydroxylysine kinase (355 aa).

Asp215 functions as the Proton acceptor in the catalytic mechanism.

This sequence belongs to the aminoglycoside phosphotransferase family.

The protein resides in the cytoplasm. It catalyses the reaction (5R)-5-hydroxy-L-lysine + GTP = (5R)-5-phosphooxy-L-lysine + GDP + H(+). In terms of biological role, catalyzes the GTP-dependent phosphorylation of 5-hydroxy-L-lysine. This Danio rerio (Zebrafish) protein is Hydroxylysine kinase (hykk).